A 340-amino-acid chain; its full sequence is L-threonine 3-dehydrogenase (340 aa).

Residue Cys38 participates in Zn(2+) binding. Residues Thr40 and His43 each act as charge relay system in the active site. Positions 63, 64, 93, 96, 99, and 107 each coordinate Zn(2+). Residues Ile175, Asp195, Arg200, Leu262 to Ile264, and Ile286 to Tyr287 contribute to the NAD(+) site.

The protein belongs to the zinc-containing alcohol dehydrogenase family. Homotetramer. Zn(2+) serves as cofactor.

The protein localises to the cytoplasm. The enzyme catalyses L-threonine + NAD(+) = (2S)-2-amino-3-oxobutanoate + NADH + H(+). The protein operates within amino-acid degradation; L-threonine degradation via oxydo-reductase pathway; glycine from L-threonine: step 1/2. Catalyzes the NAD(+)-dependent oxidation of L-threonine to 2-amino-3-ketobutyrate. In Pseudoalteromonas atlantica (strain T6c / ATCC BAA-1087), this protein is L-threonine 3-dehydrogenase.